Reading from the N-terminus, the 316-residue chain is Pantothenate kinase (316 aa).

Glycine 95–serine 102 provides a ligand contact to ATP.

The protein belongs to the prokaryotic pantothenate kinase family.

It is found in the cytoplasm. The catalysed reaction is (R)-pantothenate + ATP = (R)-4'-phosphopantothenate + ADP + H(+). It participates in cofactor biosynthesis; coenzyme A biosynthesis; CoA from (R)-pantothenate: step 1/5. In Shewanella baltica (strain OS195), this protein is Pantothenate kinase.